A 955-amino-acid chain; its full sequence is Kinesin-like protein KIN-14L (955 aa).

A Calponin-homology (CH) domain is found at 19 to 140 (AARRFQAVQW…CILGLKAYHE (122 aa)). Residues 363–685 (NIRVYCRVRP…LKFAQRVSTV (323 aa)) form the Kinesin motor domain. 445–452 (GQTGSGKT) serves as a coordination point for ATP. Residues 692-719 (AHKETREVMHLKEQIENLKRALGTEEWN) adopt a coiled-coil conformation. The tract at residues 878-942 (RKENIPADPR…GKPIENGKKD (65 aa)) is disordered. The span at 894 to 916 (NNFSHIKSPDTSNAKTMRRQSLT) shows a compositional bias: polar residues.

The protein belongs to the TRAFAC class myosin-kinesin ATPase superfamily. Kinesin family. KIN-14 subfamily.

This chain is Kinesin-like protein KIN-14L, found in Arabidopsis thaliana (Mouse-ear cress).